The following is a 142-amino-acid chain: MANGKYAARKLKKDRQKHRWSDTDYARRERGLGKKSDPLEGAPQGRGIVLEKVGIEAKQPNSAIRKCVRVQLIKNGKQVTAFCPGDGAISFIDEHDEVTIAGIGGAKGRAMGDLSGVNYKVEKVNGVSLIELVRGNAEKPVR.

The tract at residues 1-44 (MANGKYAARKLKKDRQKHRWSDTDYARRERGLGKKSDPLEGAPQ) is disordered. The segment covering 7–18 (AARKLKKDRQKH) has biased composition (basic residues). Basic and acidic residues predominate over residues 19 to 38 (RWSDTDYARRERGLGKKSDP).

Belongs to the universal ribosomal protein uS12 family. As to quaternary structure, part of the 30S ribosomal subunit.

Its function is as follows. With S4 and S5 plays an important role in translational accuracy. Located at the interface of the 30S and 50S subunits. This is Small ribosomal subunit protein uS12 from Haloarcula marismortui (strain ATCC 43049 / DSM 3752 / JCM 8966 / VKM B-1809) (Halobacterium marismortui).